A 178-amino-acid polypeptide reads, in one-letter code: Protein modigliani (178 aa).

As to quaternary structure, probably homodimerizes. Component of the MTV complex, composed of moi/modigliani, tea and ver/verrocchio. Interacts with ver/verrochio and tea (via C-terminus); the interactions are direct and require fully intact moi/modigliani and ver/verrocchio. The MTV complex is recruited to telomeres by the HipHop-HOAP complex, consisting of HipHop, cav/HOAP and Su(var)205/HP1 to form the terminin telomere-capping complex. Interacts with cav/HOAP and Su(var)205/HP1; the interactions are direct. Probably interacts with peo (via N-terminus and UBC domain).

Its subcellular location is the nucleus. The protein resides in the chromosome. It localises to the telomere. Its function is as follows. Part of the MTV complex that associates with the HipHop-HOAP complex to form the terminin telomere-capping complex involved in telomere maintenance and prevention of telomere fusion. Potentially functions downstream of mei-41/ATR. As part of the MTV complex binds single stranded DNA in a sequence-independent manner, protecting it from degradation. The protein is Protein modigliani of Drosophila melanogaster (Fruit fly).